A 399-amino-acid polypeptide reads, in one-letter code: Tryptophan synthase beta chain (399 aa).

Lys92 is subject to N6-(pyridoxal phosphate)lysine.

The protein belongs to the TrpB family. In terms of assembly, tetramer of two alpha and two beta chains. Pyridoxal 5'-phosphate is required as a cofactor.

The catalysed reaction is (1S,2R)-1-C-(indol-3-yl)glycerol 3-phosphate + L-serine = D-glyceraldehyde 3-phosphate + L-tryptophan + H2O. Its pathway is amino-acid biosynthesis; L-tryptophan biosynthesis; L-tryptophan from chorismate: step 5/5. Functionally, the beta subunit is responsible for the synthesis of L-tryptophan from indole and L-serine. The protein is Tryptophan synthase beta chain of Exiguobacterium sibiricum (strain DSM 17290 / CCUG 55495 / CIP 109462 / JCM 13490 / 255-15).